Consider the following 177-residue polypeptide: Keratin-associated protein 1-1 (177 aa).

It belongs to the KRTAP type 1 family. Interacts with hair keratins. In terms of tissue distribution, expressed in the middle/upper portions of the hair cortex, in the region termed the keratogenous zone.

In the hair cortex, hair keratin intermediate filaments are embedded in an interfilamentous matrix, consisting of hair keratin-associated proteins (KRTAP), which are essential for the formation of a rigid and resistant hair shaft through their extensive disulfide bond cross-linking with abundant cysteine residues of hair keratins. The matrix proteins include the high-sulfur and high-glycine-tyrosine keratins. The polypeptide is Keratin-associated protein 1-1 (KRTAP1-1) (Homo sapiens (Human)).